A 441-amino-acid polypeptide reads, in one-letter code: MQLNGIGKHSIRFLSDKASRFVPKGGVYPKGFMVGGIHCGVKKDGKSLDLAILTNTHGKSAVASAVFTTNKFKAAPVQVSSKIVKEKKGEEINSLVVNSGNANAVTGSQGMKDAQDMITVTDSALGNPTNSSLVMSTGVIGNNLPISKILSGIPQLAGGNLGNTHEDWLNCAQAICTTDTFPKLVSKSFELNGHTYTLAGLAKGAGMICPNMATLLGFFVTDAPVSASALDQILKFATDRSFNSISVDGDMSTNDTIVAIANGAAGGELIDNTASSAESFGILQREITGFAQQLAQLVVRDGEGATKFITISVKNALSYGDAKIIASSIANSSLFKTAMYGNDANWGRILCAIGYSQVSSGDSINPAKTNVSFIPSDGSSKLKLLVNGEPEVVDEKRASEILSVEDIEVEIDLGTGGGQECKFWTCDLTHEYITINGDYRS.

Substrate-binding residues include T177, K203, T214, E303, N436, and S441. T214 (nucleophile) is an active-site residue.

The protein belongs to the ArgJ family. As to quaternary structure, heterodimer of an alpha and a beta chain. In terms of processing, the alpha and beta chains are autoproteolytically processed from a single precursor protein within the mitochondrion.

The protein localises to the mitochondrion matrix. It catalyses the reaction N(2)-acetyl-L-ornithine + L-glutamate = N-acetyl-L-glutamate + L-ornithine. The enzyme catalyses L-glutamate + acetyl-CoA = N-acetyl-L-glutamate + CoA + H(+). It functions in the pathway amino-acid biosynthesis; L-arginine biosynthesis; L-ornithine and N-acetyl-L-glutamate from L-glutamate and N(2)-acetyl-L-ornithine (cyclic): step 1/1. Its pathway is amino-acid biosynthesis; L-arginine biosynthesis; N(2)-acetyl-L-ornithine from L-glutamate: step 1/4. In terms of biological role, catalyzes two activities which are involved in the cyclic version of arginine biosynthesis: the synthesis of acetylglutamate from glutamate and acetyl-CoA, and of ornithine by transacetylation between acetylornithine and glutamate. The sequence is that of Arginine biosynthesis bifunctional protein ArgJ, mitochondrial from Debaryomyces hansenii (strain ATCC 36239 / CBS 767 / BCRC 21394 / JCM 1990 / NBRC 0083 / IGC 2968) (Yeast).